A 470-amino-acid chain; its full sequence is Ubiquitin carboxyl-terminal hydrolase calypso (470 aa).

One can recognise a UCH catalytic domain in the interval 11–241 (GWLELESDPG…ITHKLKMLRT (231 aa)). Cys-98 acts as the Nucleophile in catalysis. Residue His-177 is the Proton donor of the active site. The stretch at 260-280 (ESRSQAEIRETVDKIKKEEQE) forms a coiled coil. The ULD domain occupies 392–420 (NYDEFICTFLSMLAYQGELGDLVTQHLVT). Residues 422–470 (RKPSLGGVQNSGSRGVVRNYNKKSTTNGSSPKTPSSKRRRGRTKYRKRK) are positively charged C-terminal tail required for binding nucleosomes. The segment covering 423–434 (KPSLGGVQNSGS) has biased composition (polar residues). A disordered region spans residues 423–470 (KPSLGGVQNSGSRGVVRNYNKKSTTNGSSPKTPSSKRRRGRTKYRKRK). Residues 456 to 470 (SSKRRRGRTKYRKRK) show a composition bias toward basic residues.

It belongs to the peptidase C12 family. BAP1 subfamily. In terms of assembly, catalytic component of the polycomb repressive deubiquitinase (PR-DUB) complex, at least composed of caly/calypso, Asx and sba (MBD5/6 homolog). The PR-DUB complex associates with nucleosomes to mediate deubiquitination of histone H2AK118ub1 substrates; the association requires the positively charged C-terminal tail of caly, probably due to direct binding of DNA. Interacts (via ULD domain) with Asx (via DEUBAD domain); the interaction produces a stable heterodimer with a composite binding site for ubiquitin. Homodimerizes (via coiled-coil hinge-region between the UCH and ULD domains) to mediate assembly of 2 copies of the caly-Asx heterodimer into a bisymmetric tetramer; dimerization enhances PR-DUB association with nucleosomes.

Its subcellular location is the nucleus. The enzyme catalyses Thiol-dependent hydrolysis of ester, thioester, amide, peptide and isopeptide bonds formed by the C-terminal Gly of ubiquitin (a 76-residue protein attached to proteins as an intracellular targeting signal).. Its function is as follows. Catalytic component of the polycomb repressive deubiquitinase (PR-DUB) complex, a complex that specifically mediates deubiquitination of histone H2A monoubiquitinated at 'Lys-119' (H2AK118ub1). Mediates bisymmetric organization of the PR-DUB complex and is involved in association with nucleosomes to mediate deubiquitination. Does not deubiquitinate monoubiquitinated histone H2B. Required to maintain the transcriptionally repressive state of homeotic genes throughout development. The PR-DUB complex has weak or no activity toward 'Lys-48'- and 'Lys-63'-linked polyubiquitin chains. Polycomb group (PcG) protein. In Culex quinquefasciatus (Southern house mosquito), this protein is Ubiquitin carboxyl-terminal hydrolase calypso.